We begin with the raw amino-acid sequence, 319 residues long: tRNA (guanine-N(7)-)-methyltransferase (319 aa).

S-adenosyl-L-methionine contacts are provided by E28, E51, and D75. Residues D134 and 167–170 (TKYE) each bind substrate.

The protein belongs to the class I-like SAM-binding methyltransferase superfamily. TrmB family.

The enzyme catalyses guanosine(46) in tRNA + S-adenosyl-L-methionine = N(7)-methylguanosine(46) in tRNA + S-adenosyl-L-homocysteine. It participates in tRNA modification; N(7)-methylguanine-tRNA biosynthesis. Functionally, catalyzes the formation of N(7)-methylguanine at position 46 (m7G46) in tRNA. This is tRNA (guanine-N(7)-)-methyltransferase from Coprothermobacter proteolyticus (strain ATCC 35245 / DSM 5265 / OCM 4 / BT).